Consider the following 48-residue polypeptide: GVACRCDSDGPTVHGDSLSGTLWLTGGCPSGWHNCRGSGPFIGYCCKK.

Intrachain disulfides connect Cys-4–Cys-45, Cys-6–Cys-35, and Cys-28–Cys-46.

It localises to the secreted. It is found in the nematocyst. Functionally, binds specifically to voltage-gated sodium channels SCN1A/Nav1.1, thereby delaying their inactivation during signal transduction. The chain is Delta-actitoxin-Bcg1c from Bunodosoma cangicum (Sea anemone).